The sequence spans 361 residues: Large ribosomal subunit protein mL45 (361 aa).

Residues 319-361 (EPPKELSAGDAEVKQVDSVGEQSKEQLPLATPVESHTKPSLAI) form a disordered region.

It belongs to the mitochondrion-specific ribosomal protein mL45 family.

Its subcellular location is the mitochondrion. This chain is Large ribosomal subunit protein mL45 (mRpL45), found in Drosophila melanogaster (Fruit fly).